Reading from the N-terminus, the 94-residue chain is DNA-directed RNA polymerase subunit Rpo11 (94 aa).

Belongs to the archaeal Rpo11/eukaryotic RPB11/RPC19 RNA polymerase subunit family. In terms of assembly, part of the RNA polymerase complex.

Its subcellular location is the cytoplasm. It catalyses the reaction RNA(n) + a ribonucleoside 5'-triphosphate = RNA(n+1) + diphosphate. In terms of biological role, DNA-dependent RNA polymerase (RNAP) catalyzes the transcription of DNA into RNA using the four ribonucleoside triphosphates as substrates. The protein is DNA-directed RNA polymerase subunit Rpo11 of Halobacterium salinarum (strain ATCC 700922 / JCM 11081 / NRC-1) (Halobacterium halobium).